The sequence spans 890 residues: Potassium/sodium hyperpolarization-activated cyclic nucleotide-gated channel 1 (890 aa).

Residues 1 to 93 are disordered; sequence MEGGGKPNSS…AEGPRRQYGF (93 aa). Residues 1-142 are Cytoplasmic-facing; the sequence is MEGGGKPNSS…WIIHPYSDFR (142 aa). Low complexity predominate over residues 8–34; the sequence is NSSSNSRDDGNSVFPAKASATGAGPAA. Positions 62–77 are enriched in gly residues; the sequence is DGGGGGGGGGGGGEEP. A helical membrane pass occupies residues 143–164; that stretch reads FYWDLIMLIMMVGNLVIIPVGI. The Extracellular segment spans residues 165 to 173; that stretch reads TFFTEQTTT. The helical transmembrane segment at 174–194 threads the bilayer; the sequence is PWIIFNVASDTVFLLDLIMNF. The Cytoplasmic segment spans residues 195–215; sequence RTGTVNEDSSEIILDPKVIKM. Residues 216-236 traverse the membrane as a helical segment; the sequence is NYLKSWFVVDFISSIPVDYIF. The Extracellular segment spans residues 237–260; that stretch reads LIVEKGMDSEVYKTARALRIVRFT. The helical; Voltage-sensor transmembrane segment at 261–281 threads the bilayer; sequence KILSLLRLLRLSRLIRYIHQW. Topologically, residues 282-295 are cytoplasmic; that stretch reads EEIFHMTYDLASAV. The helical transmembrane segment at 296–318 threads the bilayer; it reads VRIFNLIGMMLLLCHWDGCLQFL. Over 319-344 the chain is Extracellular; it reads VPLLQDFPPDCWVSLNEMVNDSWGKQ. A glycan (N-linked (GlcNAc...) asparagine) is linked at Asn-338. An intramembrane region (pore-forming) is located at residues 345 to 366; sequence YSYALFKAMSHMLCIGYGAQAP. The Selectivity filter signature appears at 358 to 362; the sequence is CIGYG. The Extracellular segment spans residues 367-371; sequence VSMSD. A helical transmembrane segment spans residues 372-392; that stretch reads LWITMLSMIVGATCYAMFVGH. The Cytoplasmic portion of the chain corresponds to 393–890; it reads ATALIQSLDS…AEKPRFASNL (498 aa). 3',5'-cyclic AMP is bound by residues Gly-539, Glu-540, Cys-542, Arg-549, Thr-550, Arg-590, and Arg-593. Composition is skewed to low complexity over residues 644 to 691 and 731 to 749; these read MTTL…PQPS and QQQP…TQPQ. Disordered regions lie at residues 644–692, 725–796, and 845–890; these read MTTL…QPSA, SQLS…LPHE, and MSSG…ASNL. Over residues 770–780 the composition is skewed to polar residues; sequence STQALHNTNLT. Positions 854–865 are enriched in pro residues; that stretch reads RGVPPAPPPPAA. The span at 880 to 890 shows a compositional bias: basic and acidic residues; sequence DAEKPRFASNL.

It belongs to the potassium channel HCN family. Homotetramer. Heterotetramer with HCN2. The potassium channel is composed of a homo- or heterotetrameric complex of pore-forming subunits. Interacts with KCNE2. Interacts with the SH3 domain of CSK. Detected in brain, in particular in amygdala and hippocampus, while expression in caudate nucleus, corpus callosum, substantia nigra, subthalamic nucleus and thalamus is very low or not detectable. Detected at very low levels in muscle and pancreas.

It is found in the cell membrane. It catalyses the reaction Na(+)(in) = Na(+)(out). The enzyme catalyses K(+)(in) = K(+)(out). With respect to regulation, activated by cAMP, and at 10-100 times higher concentrations, also by cGMP. cAMP binding promotes tetramerization and formation of an active channel. Compared to other family members, cAMP has less stimulatory effect on HCN1 because part of the molecules already contain bound cAMP and form homotetramers when cAMP levels are low, this inherent tetramerization in HCN1 results in a weaker response to increased cAMP. Inhibited by Cs(1+), zatebradine, capsazepine and ZD7288. In terms of biological role, hyperpolarization-activated ion channel that are permeable to sodium and potassium ions. Displays lower selectivity for K(+) over Na(+) ions. Contributes to the native pacemaker currents in heart (If) and in the generation of the I(h) current which controls neuron excitability. Participates in cerebellar mechanisms of motor learning. May mediate responses to sour stimuli. This Homo sapiens (Human) protein is Potassium/sodium hyperpolarization-activated cyclic nucleotide-gated channel 1 (HCN1).